Consider the following 264-residue polypeptide: 3-methyl-2-oxobutanoate hydroxymethyltransferase (264 aa).

Mg(2+)-binding residues include Asp-41 and Asp-80. Residues 41 to 42 (DS), Asp-80, and Lys-109 contribute to the 3-methyl-2-oxobutanoate site. Position 111 (Glu-111) interacts with Mg(2+). Catalysis depends on Glu-178, which acts as the Proton acceptor.

It belongs to the PanB family. In terms of assembly, homodecamer; pentamer of dimers. It depends on Mg(2+) as a cofactor.

It localises to the cytoplasm. It catalyses the reaction 3-methyl-2-oxobutanoate + (6R)-5,10-methylene-5,6,7,8-tetrahydrofolate + H2O = 2-dehydropantoate + (6S)-5,6,7,8-tetrahydrofolate. Its pathway is cofactor biosynthesis; (R)-pantothenate biosynthesis; (R)-pantoate from 3-methyl-2-oxobutanoate: step 1/2. Functionally, catalyzes the reversible reaction in which hydroxymethyl group from 5,10-methylenetetrahydrofolate is transferred onto alpha-ketoisovalerate to form ketopantoate. This chain is 3-methyl-2-oxobutanoate hydroxymethyltransferase, found in Thermosipho melanesiensis (strain DSM 12029 / CIP 104789 / BI429).